Reading from the N-terminus, the 320-residue chain is Biotin synthase (320 aa).

One can recognise a Radical SAM core domain in the interval 39–267 (NAIQLATLLS…KARVRLSAGR (229 aa)). [4Fe-4S] cluster is bound by residues cysteine 54, cysteine 58, and cysteine 61. 4 residues coordinate [2Fe-2S] cluster: cysteine 98, cysteine 130, cysteine 190, and arginine 262.

Belongs to the radical SAM superfamily. Biotin synthase family. Homodimer. [4Fe-4S] cluster serves as cofactor. The cofactor is [2Fe-2S] cluster.

It catalyses the reaction (4R,5S)-dethiobiotin + (sulfur carrier)-SH + 2 reduced [2Fe-2S]-[ferredoxin] + 2 S-adenosyl-L-methionine = (sulfur carrier)-H + biotin + 2 5'-deoxyadenosine + 2 L-methionine + 2 oxidized [2Fe-2S]-[ferredoxin]. It participates in cofactor biosynthesis; biotin biosynthesis; biotin from 7,8-diaminononanoate: step 2/2. Functionally, catalyzes the conversion of dethiobiotin (DTB) to biotin by the insertion of a sulfur atom into dethiobiotin via a radical-based mechanism. This Synechococcus elongatus (strain ATCC 33912 / PCC 7942 / FACHB-805) (Anacystis nidulans R2) protein is Biotin synthase.